A 314-amino-acid polypeptide reads, in one-letter code: Homoserine O-acetyltransferase (314 aa).

Cysteine 142 serves as the catalytic Acyl-thioester intermediate. Residues lysine 163 and serine 192 each coordinate substrate. Residue histidine 235 is the Proton acceptor of the active site. The active site involves glutamate 237. Arginine 249 contributes to the substrate binding site.

This sequence belongs to the MetA family.

It is found in the cytoplasm. The catalysed reaction is L-homoserine + acetyl-CoA = O-acetyl-L-homoserine + CoA. Its pathway is amino-acid biosynthesis; L-methionine biosynthesis via de novo pathway; O-acetyl-L-homoserine from L-homoserine: step 1/1. In terms of biological role, transfers an acetyl group from acetyl-CoA to L-homoserine, forming acetyl-L-homoserine. The sequence is that of Homoserine O-acetyltransferase from Streptococcus thermophilus (strain ATCC BAA-250 / LMG 18311).